A 139-amino-acid polypeptide reads, in one-letter code: ATP synthase epsilon chain (139 aa).

The protein belongs to the ATPase epsilon chain family. In terms of assembly, F-type ATPases have 2 components, CF(1) - the catalytic core - and CF(0) - the membrane proton channel. CF(1) has five subunits: alpha(3), beta(3), gamma(1), delta(1), epsilon(1). CF(0) has three main subunits: a, b and c.

It localises to the cell inner membrane. Its function is as follows. Produces ATP from ADP in the presence of a proton gradient across the membrane. The polypeptide is ATP synthase epsilon chain (Pseudomonas putida (strain GB-1)).